The chain runs to 340 residues: Phenylalanine--tRNA ligase alpha subunit (340 aa).

E255 is a Mg(2+) binding site.

This sequence belongs to the class-II aminoacyl-tRNA synthetase family. Phe-tRNA synthetase alpha subunit type 1 subfamily. As to quaternary structure, tetramer of two alpha and two beta subunits. The cofactor is Mg(2+).

It localises to the cytoplasm. It carries out the reaction tRNA(Phe) + L-phenylalanine + ATP = L-phenylalanyl-tRNA(Phe) + AMP + diphosphate + H(+). The protein is Phenylalanine--tRNA ligase alpha subunit of Syntrophomonas wolfei subsp. wolfei (strain DSM 2245B / Goettingen).